A 183-amino-acid chain; its full sequence is Peptide deformylase (183 aa).

The Fe cation site is built by cysteine 111 and histidine 154. Glutamate 155 is a catalytic residue. A Fe cation-binding site is contributed by histidine 158.

Belongs to the polypeptide deformylase family. Requires Fe(2+) as cofactor.

It carries out the reaction N-terminal N-formyl-L-methionyl-[peptide] + H2O = N-terminal L-methionyl-[peptide] + formate. Functionally, removes the formyl group from the N-terminal Met of newly synthesized proteins. Requires at least a dipeptide for an efficient rate of reaction. N-terminal L-methionine is a prerequisite for activity but the enzyme has broad specificity at other positions. The chain is Peptide deformylase from Staphylococcus epidermidis (strain ATCC 35984 / DSM 28319 / BCRC 17069 / CCUG 31568 / BM 3577 / RP62A).